The following is a 283-amino-acid chain: Calpastatin (283 aa).

Positions 1 to 15 are enriched in polar residues; it reads MNPTETKAIPVSQQM. Disordered stretches follow at residues 1 to 186 and 212 to 283; these read MNPT…SDPM and NEGI…KVEK. Positions 21 to 30 are enriched in basic residues; sequence PNKKKHKKQA. Lys-32 participates in a covalent cross-link: Glycyl lysine isopeptide (Lys-Gly) (interchain with G-Cter in SUMO2). Positions 46–65 are enriched in basic and acidic residues; it reads VVHEKKSQEGKPKEHTEQKS. Lys-50 carries the post-translational modification N6-acetyllysine. Ser-87 carries the post-translational modification Phosphoserine. A compositionally biased stretch (low complexity) spans 107 to 122; that stretch reads VSAGGESVAGVAATSG. Ser-133 carries the post-translational modification Phosphoserine. Position 135 is a phosphothreonine (Thr-135). Residues 170–222 form an Inhibitory domain 1 repeat; that stretch reads IEEENTTYTGPEVSDPMSSTYIEELGKREVTIPPKYRELLAKNEGITGPPADS. Phosphoserine is present on residues Ser-222 and Ser-243. Residues 249–258 are compositionally biased toward basic and acidic residues; the sequence is KKTEKEESTE.

Belongs to the protease inhibitor I27 (calpastatin) family.

Its function is as follows. Specific inhibition of calpain (calcium-dependent cysteine protease). Plays a key role in postmortem tenderization of meat and have been proposed to be involved in muscle protein degradation in living tissue. This is Calpastatin (CAST) from Chlorocebus aethiops (Green monkey).